Consider the following 85-residue polypeptide: Large ribosomal subunit protein eL34 (85 aa).

This sequence belongs to the eukaryotic ribosomal protein eL34 family.

The chain is Large ribosomal subunit protein eL34 from Saccharolobus islandicus (strain Y.N.15.51 / Yellowstone #2) (Sulfolobus islandicus).